A 293-amino-acid chain; its full sequence is Homoserine O-acetyltransferase (293 aa).

The Acyl-thioester intermediate role is filled by C141. Residues K162 and S190 each coordinate substrate. Residue H234 is the Proton acceptor of the active site. The active site involves E236. R248 serves as a coordination point for substrate.

This sequence belongs to the MetA family.

The protein resides in the cytoplasm. The catalysed reaction is L-homoserine + acetyl-CoA = O-acetyl-L-homoserine + CoA. Its pathway is amino-acid biosynthesis; L-methionine biosynthesis via de novo pathway; O-acetyl-L-homoserine from L-homoserine: step 1/1. Transfers an acetyl group from acetyl-CoA to L-homoserine, forming acetyl-L-homoserine. This chain is Homoserine O-acetyltransferase, found in Campylobacter jejuni subsp. jejuni serotype O:2 (strain ATCC 700819 / NCTC 11168).